The primary structure comprises 447 residues: MHLAQLRQPLTRAAANSCHSVCRLPTTHSSVSATAILSEQFAHLRIGPSSSNVAVEGRRYASVKAQGAYRLKPKRTIPKKLGAKKTGDQYVIPGNIIYKQRGTLWHPGENTIMGRDHTIHAAVAGYVKYYRDPQLHPDRQYIGVVFNRNDKLPYPKDAPRKRKLGLVAVPRKVEEVEKPTMSASGLPLFVTRHETIEIPPPAVTTPAAAGKAVKGQGARVSASGAAAVPASSSTISASASSNSNNGGSSVIAELIKEKLAARAEYNARQSALRKLQQQKMLARRGTRVLRLMNNYSYRETNWEIGRLIGDPGSVPGTEKVGSRKAKFRARRRRRNTFLLGIKERKLAKADRREEYRRRVREKREQRLVQRKEFLAKQREAKKAREGGAAAEKSEKKEVKAEKPAAAAPKVEKPKAPEAAKKESKPKVEEKKAAAAEPKKDSKTEKKD.

Composition is skewed to basic and acidic residues over residues Gln377–Lys402 and Lys409–Asp447. A disordered region spans residues Gln377–Asp447.

Belongs to the bacterial ribosomal protein bL27 family. Component of the mitochondrial large ribosomal subunit (mt-LSU). Mature N.crassa 74S mitochondrial ribosomes consist of a small (37S) and a large (54S) subunit. The 37S small subunit contains a 16S ribosomal RNA (16S mt-rRNA) and 32 different proteins. The 54S large subunit contains a 23S rRNA (23S mt-rRNA) and 42 different proteins.

It localises to the mitochondrion. Its function is as follows. Component of the mitochondrial ribosome (mitoribosome), a dedicated translation machinery responsible for the synthesis of mitochondrial genome-encoded proteins, including at least some of the essential transmembrane subunits of the mitochondrial respiratory chain. The mitoribosomes are attached to the mitochondrial inner membrane and translation products are cotranslationally integrated into the membrane. The polypeptide is Large ribosomal subunit protein bL27m (mrp7) (Neurospora crassa (strain ATCC 24698 / 74-OR23-1A / CBS 708.71 / DSM 1257 / FGSC 987)).